We begin with the raw amino-acid sequence, 101 residues long: Small ribosomal subunit protein uS14 (101 aa).

The protein belongs to the universal ribosomal protein uS14 family. Part of the 30S ribosomal subunit. Contacts proteins S3 and S10.

Binds 16S rRNA, required for the assembly of 30S particles and may also be responsible for determining the conformation of the 16S rRNA at the A site. In Methylorubrum populi (strain ATCC BAA-705 / NCIMB 13946 / BJ001) (Methylobacterium populi), this protein is Small ribosomal subunit protein uS14.